The primary structure comprises 1858 residues: Protein ROS1C (1858 aa).

Over residues 347–356 (TEALKGEDAP) the composition is skewed to basic and acidic residues. Disordered stretches follow at residues 347 to 416 (TEAL…AEPF) and 1288 to 1309 (PDTAAQASKPKKSRTTSKKNSE). Basic residues-rich tracts occupy residues 360-370 (LKTRRRKHRPK) and 394-404 (KPKRKYVRKNR). Residues C1492, C1499, C1502, and C1508 each contribute to the [4Fe-4S] cluster site.

The protein belongs to the DNA glycosylase family. DEMETER subfamily. [4Fe-4S] cluster serves as cofactor. Expressed in pistils and immature seeds. Expressed a low levels in roots, leaves and anthers.

The protein resides in the nucleus. Bifunctional DNA glycosylase/lyase, which excises 5-methylcytosine (5-meC) and 5-hydroxymethylcytosine (5-hmeC), leaving an apyrimidinic (AP) site that is subsequently incised by the lyase activity. Is responsible for the demethylation of methylated cytosine residues of Tos17 retrotransposon DNA. Demethylation of Tos17 cytosine residues promotes its transposition. May be involved in seed development. The protein is Protein ROS1C of Oryza sativa subsp. japonica (Rice).